The chain runs to 432 residues: Anaerobic glycerol-3-phosphate dehydrogenase subunit B (432 aa).

Belongs to the anaerobic G-3-P dehydrogenase subunit B family. Composed of a catalytic GlpA/B dimer and of membrane bound GlpC. FMN serves as cofactor.

It catalyses the reaction a quinone + sn-glycerol 3-phosphate = dihydroxyacetone phosphate + a quinol. It functions in the pathway polyol metabolism; glycerol degradation via glycerol kinase pathway; glycerone phosphate from sn-glycerol 3-phosphate (anaerobic route): step 1/1. Its function is as follows. Conversion of glycerol 3-phosphate to dihydroxyacetone. Uses fumarate or nitrate as electron acceptor. The protein is Anaerobic glycerol-3-phosphate dehydrogenase subunit B (glpB) of Haemophilus influenzae (strain ATCC 51907 / DSM 11121 / KW20 / Rd).